The sequence spans 114 residues: MEYVYAALILNEADEELTEDNITGVLEAAGVDVEESRAKALVAALEDVDIEEAVEEAAAAPAAAPAASGSDDEAAADDGDDDEEADADEAAEAEDAGDDDDEEPSGEGLGDLFG.

The interval 55-114 is disordered; that stretch reads EEAAAAPAAAPAASGSDDEAAADDGDDDEEADADEAAEAEDAGDDDDEEPSGEGLGDLFG. Low complexity predominate over residues 56 to 69; sequence EAAAAPAAAPAASG. Over residues 70 to 105 the composition is skewed to acidic residues; it reads SDDEAAADDGDDDEEADADEAAEAEDAGDDDDEEPS.

It belongs to the eukaryotic ribosomal protein P1/P2 family. Part of the 50S ribosomal subunit. Homodimer, it forms part of the ribosomal stalk which helps the ribosome interact with GTP-bound translation factors. Forms a heptameric uL10/P0(P1)2(P1)2(P1)2 complex, where uL10/P0 forms an elongated spine to which the P1 dimers bind in a sequential fashion.

Its function is as follows. Forms part of the ribosomal stalk, playing a central role in the interaction of the ribosome with GTP-bound translation factors. This is Large ribosomal subunit protein P1 from Halobacterium salinarum (strain ATCC 700922 / JCM 11081 / NRC-1) (Halobacterium halobium).